The following is a 618-amino-acid chain: Serine/threonine-protein kinase TNNI3K (618 aa).

Glycine 2 carries the N-myristoyl glycine lipid modification. Residues 21–51 adopt a coiled-coil conformation; sequence SESYVITIERLEDDLKIKEKELTELRNIFGS. 10 ANK repeats span residues 66 to 96, 100 to 129, 133 to 162, 166 to 195, 199 to 228, 234 to 263, 269 to 298, 304 to 335, 339 to 368, and 381 to 410; these read NGLSLLHLCCICGGNKSHIRTLMLKGLRPSR, NGFTALHLAVYKDNAELITSLLHGGADIQQ, GGLTALHIATIAGHLEAADVLLQHGANVNI, VFFTPLHIAAYYGHEQVTRLLLKFGADVNV, VGDRPLHLASAKGFLNIAKLLMEEGSKADV, EDHVPLHFCSRFGHHDIVKYLLQNDLEVQP, YGDTPLHLACYNGKFEVAKEIIQISGTESL, FSETAFHSACTYGKSIDLVKFLLDQNVININH, DGHTGLHSACYHGHIHLVQFLLDNGADMNL, and DEQTCLMWAYEKGHDAIVTLLKHYKRPQDE. Residues 463–618 form the Protein kinase domain; sequence IEFHEIIGSG…TAHTIYLLAP (156 aa). Residues 469–477 and lysine 490 each bind ATP; that span reads IGSGSFGKV. The Proton acceptor role is filled by aspartate 588.

The protein belongs to the protein kinase superfamily. TKL Ser/Thr protein kinase family. MAP kinase kinase kinase subfamily. In terms of assembly, interacts with TNNI3, ACTC, ACTA1, MYBPC3, AIP, FABP3 and HADHB. It depends on Mg(2+) as a cofactor. In terms of processing, autophosphorylated.

The protein localises to the nucleus. It localises to the cytoplasm. The enzyme catalyses L-seryl-[protein] + ATP = O-phospho-L-seryl-[protein] + ADP + H(+). The catalysed reaction is L-threonyl-[protein] + ATP = O-phospho-L-threonyl-[protein] + ADP + H(+). Functionally, may play a role in cardiac physiology. This is Serine/threonine-protein kinase TNNI3K from Pongo abelii (Sumatran orangutan).